The chain runs to 346 residues: N(4)-(beta-N-acetylglucosaminyl)-L-asparaginase (346 aa).

The N-terminal stretch at 1-23 (MERKSNLSLLLLLLVLGMPLVRG) is a signal peptide. N-linked (GlcNAc...) asparagine glycosylation occurs at asparagine 38. Cystine bridges form between cysteine 64–cysteine 69 and cysteine 163–cysteine 179. The active-site Nucleophile is the threonine 206. Residues 234–237 (RVGD) and 257–260 (TGDG) contribute to the substrate site. Cysteine 286 and cysteine 306 are disulfide-bonded. N-linked (GlcNAc...) asparagine glycosylation occurs at asparagine 310. Cysteine 317 and cysteine 345 are oxidised to a cystine.

This sequence belongs to the Ntn-hydrolase family. In terms of assembly, heterotetramer of two alpha and two beta chains arranged as a dimer of alpha/beta heterodimers. Cleaved into an alpha and beta chain by autocatalysis; this activates the enzyme. The N-terminal residue of the beta subunit is responsible for the nucleophile hydrolase activity. In terms of processing, N-glycosylated.

The protein resides in the lysosome. The catalysed reaction is N(4)-(beta-N-acetyl-D-glucosaminyl)-L-asparagine + H2O = N-acetyl-beta-D-glucosaminylamine + L-aspartate + H(+). In terms of biological role, cleaves the GlcNAc-Asn bond which joins oligosaccharides to the peptide of asparagine-linked glycoproteins. In Mus musculus (Mouse), this protein is N(4)-(beta-N-acetylglucosaminyl)-L-asparaginase (Aga).